A 466-amino-acid chain; its full sequence is MNTKLNDFKKKIKNKKVAVLGIGISHTPLISYLYRLGADITAFDKADEVKLKSTLEQFKGMDIKYSLGEGYLDNLKGFDILFRTPGMRYDIPEILAAKEEGTEVTSEMEVFFELCPAEIFAVTGSDGKTTTTTLIYNMLKEQGYKCWLGGNIGIPLLSKIEEIKDTDKVVLELSSFQLHTMTKSPNVAVVTNVSPNHLDVHKSMEEYVSAKKNIFRYQSAEDRLVLNFDNDITREFAGEAKGDVVYFSRKTVLEKGAMLKDDMLVFRDGETETEIAKASDIVIPGVHNVENFLAATAAVIDCVDRDVIRKVATTFTGVEHRIELVREINGVKFYNDSIASSPTRTIAGLNSFKDKVILIAGGYDKKIPYDALGPVIAEKVKCLVLIGQTAPKIEKVLRDETERSGKGSDIPIKKCTSLEEAVKVAYRFASVGDVVILSPASASFDMFKNFEERGNRFKEIVNSIEA.

124–130 (GSDGKTT) is an ATP binding site.

The protein belongs to the MurCDEF family.

The protein resides in the cytoplasm. The enzyme catalyses UDP-N-acetyl-alpha-D-muramoyl-L-alanine + D-glutamate + ATP = UDP-N-acetyl-alpha-D-muramoyl-L-alanyl-D-glutamate + ADP + phosphate + H(+). The protein operates within cell wall biogenesis; peptidoglycan biosynthesis. In terms of biological role, cell wall formation. Catalyzes the addition of glutamate to the nucleotide precursor UDP-N-acetylmuramoyl-L-alanine (UMA). This chain is UDP-N-acetylmuramoylalanine--D-glutamate ligase, found in Acetivibrio thermocellus (strain ATCC 27405 / DSM 1237 / JCM 9322 / NBRC 103400 / NCIMB 10682 / NRRL B-4536 / VPI 7372) (Clostridium thermocellum).